Reading from the N-terminus, the 511-residue chain is Transcription factor bHLH28 (511 aa).

Residues 339–388 (DKPLNHVEAERMRREKLNHRFYALRAVVPNVSKMDKTSLLEDAVCYINEL) form the bHLH domain.

Homodimer.

The protein localises to the nucleus. The chain is Transcription factor bHLH28 (BHLH28) from Arabidopsis thaliana (Mouse-ear cress).